A 676-amino-acid chain; its full sequence is DNA ligase (676 aa).

NAD(+)-binding positions include 41-45 (DLTYD), 90-91 (SL), and Glu-123. The active-site N6-AMP-lysine intermediate is Lys-125. Arg-146, Glu-180, Lys-293, and Lys-317 together coordinate NAD(+). Zn(2+)-binding residues include Cys-408, Cys-411, Cys-424, and Cys-429.

Belongs to the NAD-dependent DNA ligase family. LigA subfamily. Requires Mg(2+) as cofactor. The cofactor is Mn(2+).

It catalyses the reaction NAD(+) + (deoxyribonucleotide)n-3'-hydroxyl + 5'-phospho-(deoxyribonucleotide)m = (deoxyribonucleotide)n+m + AMP + beta-nicotinamide D-nucleotide.. Functionally, DNA ligase that catalyzes the formation of phosphodiester linkages between 5'-phosphoryl and 3'-hydroxyl groups in double-stranded DNA using NAD as a coenzyme and as the energy source for the reaction. It is essential for DNA replication and repair of damaged DNA. In Borrelia turicatae (strain 91E135), this protein is DNA ligase.